Reading from the N-terminus, the 119-residue chain is Non-structural protein 3b (119 aa).

Positions 2-83 (DYVSLLNQFW…ARLICEQLQA (82 aa)) constitute a DRBM domain.

As to quaternary structure, interacts with host RUNX1 isoform b.

It is found in the host nucleus. Its subcellular location is the host nucleolus. It localises to the host mitochondrion. Induces host cell G0/G1 arrest and apoptosis. This Tylonycteris pachypus (Lesser bamboo bat) protein is Non-structural protein 3b.